The chain runs to 208 residues: Small ribosomal subunit protein uS4 (208 aa).

The S4 RNA-binding domain maps to 95-155; that stretch reads TRLDALVLRA…AKSQTMVPFQ (61 aa).

Belongs to the universal ribosomal protein uS4 family. As to quaternary structure, part of the 30S ribosomal subunit. Contacts protein S5. The interaction surface between S4 and S5 is involved in control of translational fidelity.

Its function is as follows. One of the primary rRNA binding proteins, it binds directly to 16S rRNA where it nucleates assembly of the body of the 30S subunit. In terms of biological role, with S5 and S12 plays an important role in translational accuracy. This is Small ribosomal subunit protein uS4 from Bifidobacterium adolescentis (strain ATCC 15703 / DSM 20083 / NCTC 11814 / E194a).